We begin with the raw amino-acid sequence, 115 residues long: Large ribosomal subunit protein uL24 (115 aa).

The protein belongs to the universal ribosomal protein uL24 family. In terms of assembly, part of the 50S ribosomal subunit.

In terms of biological role, one of two assembly initiator proteins, it binds directly to the 5'-end of the 23S rRNA, where it nucleates assembly of the 50S subunit. Its function is as follows. One of the proteins that surrounds the polypeptide exit tunnel on the outside of the subunit. In Aster yellows witches'-broom phytoplasma (strain AYWB), this protein is Large ribosomal subunit protein uL24.